The sequence spans 145 residues: Heat shock protein hsp-16.2 (145 aa).

Positions 32 to 137 (VCRISPSESS…QGRSIPIQQA (106 aa)) constitute a sHSP domain.

It belongs to the small heat shock protein (HSP20) family.

This chain is Heat shock protein hsp-16.2, found in Caenorhabditis elegans.